Reading from the N-terminus, the 474-residue chain is Bifunctional protein HldE (474 aa).

A ribokinase region spans residues 1 to 318 (MKLSMPRFDQ…RAIQREEGSE (318 aa)). 194–197 (NLSE) is a binding site for ATP. Asp-263 is a catalytic residue. The segment at 343 to 474 (FTNGCFDILH…AIVEKIRKSE (132 aa)) is cytidylyltransferase.

The protein in the N-terminal section; belongs to the carbohydrate kinase PfkB family. This sequence in the C-terminal section; belongs to the cytidylyltransferase family. Homodimer.

It catalyses the reaction D-glycero-beta-D-manno-heptose 7-phosphate + ATP = D-glycero-beta-D-manno-heptose 1,7-bisphosphate + ADP + H(+). The enzyme catalyses D-glycero-beta-D-manno-heptose 1-phosphate + ATP + H(+) = ADP-D-glycero-beta-D-manno-heptose + diphosphate. Its pathway is nucleotide-sugar biosynthesis; ADP-L-glycero-beta-D-manno-heptose biosynthesis; ADP-L-glycero-beta-D-manno-heptose from D-glycero-beta-D-manno-heptose 7-phosphate: step 1/4. The protein operates within nucleotide-sugar biosynthesis; ADP-L-glycero-beta-D-manno-heptose biosynthesis; ADP-L-glycero-beta-D-manno-heptose from D-glycero-beta-D-manno-heptose 7-phosphate: step 3/4. Its function is as follows. Catalyzes the phosphorylation of D-glycero-D-manno-heptose 7-phosphate at the C-1 position to selectively form D-glycero-beta-D-manno-heptose-1,7-bisphosphate. Functionally, catalyzes the ADP transfer from ATP to D-glycero-beta-D-manno-heptose 1-phosphate, yielding ADP-D-glycero-beta-D-manno-heptose. The polypeptide is Bifunctional protein HldE (Pseudomonas fluorescens (strain Pf0-1)).